A 132-amino-acid polypeptide reads, in one-letter code: Phosphoribosyl-AMP cyclohydrolase (132 aa).

Mg(2+) is bound at residue D86. A Zn(2+)-binding site is contributed by C87. Residues D88 and D90 each contribute to the Mg(2+) site. Zn(2+) is bound by residues C103 and C110.

It belongs to the PRA-CH family. In terms of assembly, homodimer. The cofactor is Mg(2+). Requires Zn(2+) as cofactor.

The protein resides in the cytoplasm. The enzyme catalyses 1-(5-phospho-beta-D-ribosyl)-5'-AMP + H2O = 1-(5-phospho-beta-D-ribosyl)-5-[(5-phospho-beta-D-ribosylamino)methylideneamino]imidazole-4-carboxamide. Its pathway is amino-acid biosynthesis; L-histidine biosynthesis; L-histidine from 5-phospho-alpha-D-ribose 1-diphosphate: step 3/9. Catalyzes the hydrolysis of the adenine ring of phosphoribosyl-AMP. The protein is Phosphoribosyl-AMP cyclohydrolase of Clavibacter michiganensis subsp. michiganensis (strain NCPPB 382).